We begin with the raw amino-acid sequence, 624 residues long: ABC transporter G family member 23 (624 aa).

In terms of domain architecture, ABC transporter spans 52–296; it reads LTVTNLSYTI…IAKLGFQIPE (245 aa). 84–91 lines the ATP pocket; it reads GPSGTGKS. The ABC transmembrane type-2 domain occupies 350–560; it reads TEISYLCSRF…PLESMVVNEY (211 aa). The next 6 membrane-spanning stretches (helical) occupy residues 369-389, 402-422, 450-470, 480-500, 511-531, and 595-615; these read LFLARTMQAVVAGLGLGSVYT, LGLFAFSLSFLLSSTVEALPI, IAFVPFLFVVSLLFSIPVYWI, FSFFVLCVWLIILMASSLVLF, GNSLICTVLGAFFLFSGYFIP, and INVGIMLAFFVFYRILCWGIL.

The protein belongs to the ABC transporter superfamily. ABCG family. Eye pigment precursor importer (TC 3.A.1.204) subfamily.

The protein localises to the membrane. The chain is ABC transporter G family member 23 (ABCG23) from Arabidopsis thaliana (Mouse-ear cress).